Reading from the N-terminus, the 1042-residue chain is Ribosome biogenesis protein NOC1 (1042 aa).

6 disordered regions span residues 1 to 20 (MGLKRAARQQRDIGKPAFDE), 28 to 79 (GKID…AAKD), 101 to 128 (LVADVDSGNEGGGGPSQPKISSEQSLDQ), 148 to 214 (NRED…IPQD), 546 to 567 (LNGDKRDGGTPRKKSNPSGSLT), and 897 to 1020 (GKMT…LKTL). 2 stretches are compositionally biased toward basic and acidic residues: residues 9–18 (QQRDIGKPAF) and 63–79 (HPTEAEEHRDSHAAAKD). A compositionally biased stretch (polar residues) spans 118 to 128 (PKISSEQSLDQ). 2 stretches are compositionally biased toward acidic residues: residues 153 to 164 (NTEDEASPDEDA) and 173 to 194 (SDSDEGGGQEEMEKEDVDSFSD). Residues 195–207 (NEEKVTEKVDSGE) show a composition bias toward basic and acidic residues. Over residues 902-911 (KRDETKREFG) the composition is skewed to basic and acidic residues. The span at 937 to 957 (NVDDDSDADLGDFDYSDDEED) shows a compositional bias: acidic residues. Residues 962–972 (DGSMSDIGMDS) show a composition bias toward low complexity. Residues 978–994 (IFDDAGESDEQSSGEDE) are compositionally biased toward acidic residues.

The protein belongs to the CBF/MAK21 family. Interacts with NOC2. Forms a nucleolar complex with NOC2 that binds to 90S and 66S pre-ribosomes.

The protein localises to the nucleus. The protein resides in the nucleolus. Its function is as follows. Required for 60S ribosomal subunit synthesis. This Chaetomium thermophilum (strain DSM 1495 / CBS 144.50 / IMI 039719) (Thermochaetoides thermophila) protein is Ribosome biogenesis protein NOC1 (NOC1).